The sequence spans 60 residues: Large ribosomal subunit protein uL30 (60 aa).

It belongs to the universal ribosomal protein uL30 family. Part of the 50S ribosomal subunit.

The sequence is that of Large ribosomal subunit protein uL30 from Bacillus anthracis (strain A0248).